We begin with the raw amino-acid sequence, 714 residues long: DNA ligase (714 aa).

Residues 48-52 (DADYD), 97-98 (SL), and E129 contribute to the NAD(+) site. Residue K131 is the N6-AMP-lysine intermediate of the active site. Residues R152, E189, K307, and K331 each coordinate NAD(+). 4 residues coordinate Zn(2+): C436, C439, C454, and C460. In terms of domain architecture, BRCT spans 637 to 714 (KQDTAVAGKT…TEDEWLALIG (78 aa)).

This sequence belongs to the NAD-dependent DNA ligase family. LigA subfamily. The cofactor is Mg(2+). Requires Mn(2+) as cofactor.

The enzyme catalyses NAD(+) + (deoxyribonucleotide)n-3'-hydroxyl + 5'-phospho-(deoxyribonucleotide)m = (deoxyribonucleotide)n+m + AMP + beta-nicotinamide D-nucleotide.. Functionally, DNA ligase that catalyzes the formation of phosphodiester linkages between 5'-phosphoryl and 3'-hydroxyl groups in double-stranded DNA using NAD as a coenzyme and as the energy source for the reaction. It is essential for DNA replication and repair of damaged DNA. The protein is DNA ligase of Rhodopseudomonas palustris (strain BisB5).